The primary structure comprises 313 residues: Ribosomal RNA small subunit methyltransferase H (313 aa).

Residues 31–33 (GGH), Asp51, Phe77, Asp95, and Gln102 each bind S-adenosyl-L-methionine.

The protein belongs to the methyltransferase superfamily. RsmH family.

Its subcellular location is the cytoplasm. It catalyses the reaction cytidine(1402) in 16S rRNA + S-adenosyl-L-methionine = N(4)-methylcytidine(1402) in 16S rRNA + S-adenosyl-L-homocysteine + H(+). In terms of biological role, specifically methylates the N4 position of cytidine in position 1402 (C1402) of 16S rRNA. The chain is Ribosomal RNA small subunit methyltransferase H from Xylella fastidiosa (strain 9a5c).